Here is a 438-residue protein sequence, read N- to C-terminus: Na(+)/H(+) antiporter NhaA (438 aa).

11 helical membrane passes run Phe23–Leu43, Phe62–Leu82, Ser104–Leu124, Gly133–Gly153, Val162–Phe182, Thr185–Leu205, Val221–Leu241, Phe302–Val322, Leu337–Ile357, Trp372–Ile392, and Ile410–Leu430.

This sequence belongs to the NhaA Na(+)/H(+) (TC 2.A.33) antiporter family.

The protein localises to the cell inner membrane. It carries out the reaction Na(+)(in) + 2 H(+)(out) = Na(+)(out) + 2 H(+)(in). Functionally, na(+)/H(+) antiporter that extrudes sodium in exchange for external protons. This is Na(+)/H(+) antiporter NhaA from Helicobacter pylori (strain HPAG1).